The following is a 661-amino-acid chain: UvrABC system protein B (661 aa).

The Helicase ATP-binding domain occupies 25-182; the sequence is AGLNSKKRSQ…SDLVNLQYER (158 aa). Position 38–45 (38–45) interacts with ATP; sequence GITGSGKT. Residues 91 to 114 carry the Beta-hairpin motif; sequence YYDYYQPEAYIARTDTFIEKDSSI. The region spanning 430 to 592 is the Helicase C-terminal domain; it reads QVEDLISEIQ…IIPQTINRTI (163 aa). One can recognise a UVR domain in the interval 621–656; it reads KAHIYKLKKAMLKAASNLEFEQATKLRDQLKNLEEA.

It belongs to the UvrB family. As to quaternary structure, forms a heterotetramer with UvrA during the search for lesions. Interacts with UvrC in an incision complex.

It is found in the cytoplasm. The UvrABC repair system catalyzes the recognition and processing of DNA lesions. A damage recognition complex composed of 2 UvrA and 2 UvrB subunits scans DNA for abnormalities. Upon binding of the UvrA(2)B(2) complex to a putative damaged site, the DNA wraps around one UvrB monomer. DNA wrap is dependent on ATP binding by UvrB and probably causes local melting of the DNA helix, facilitating insertion of UvrB beta-hairpin between the DNA strands. Then UvrB probes one DNA strand for the presence of a lesion. If a lesion is found the UvrA subunits dissociate and the UvrB-DNA preincision complex is formed. This complex is subsequently bound by UvrC and the second UvrB is released. If no lesion is found, the DNA wraps around the other UvrB subunit that will check the other stand for damage. The sequence is that of UvrABC system protein B from Rickettsia canadensis (strain McKiel).